Reading from the N-terminus, the 65-residue chain is uncharacterized protein (65 aa).

The protein resides in the plastid. The protein localises to the chloroplast. This is an uncharacterized protein from Porphyra purpurea (Red seaweed).